The chain runs to 153 residues: Flagellar assembly factor FliW (153 aa).

The protein belongs to the FliW family. In terms of assembly, interacts with translational regulator CsrA and flagellin(s).

The protein resides in the cytoplasm. In terms of biological role, acts as an anti-CsrA protein, binds CsrA and prevents it from repressing translation of its target genes, one of which is flagellin. Binds to flagellin and participates in the assembly of the flagellum. The chain is Flagellar assembly factor FliW from Heliobacterium modesticaldum (strain ATCC 51547 / Ice1).